A 260-amino-acid chain; its full sequence is MTKTLTKHLQAIKAEGKGLFIPYIMAGDHDKGLDGLFDTISFLEAQGVSAIEIGIPWSDPVADGPVIELAGQRSLVKGTSLASIIARLQEKKTQVPLVIMTYFNPVFQYGVETFVADLQNTSVKGLIIPDLPHEQESFIKPYLENLDLALVPLVSLTTGLERQKELIEDARGFVYAVAINGVTGKTGNYRDDLDKHLKHLTEIAQIPVLTGFGVSTLADIKRFNQVSDGVIVGSKIVKGLHEGMQEEIKDFIYAGSHYQK.

Active-site proton acceptor residues include Glu-52 and Asp-63.

This sequence belongs to the TrpA family. As to quaternary structure, tetramer of two alpha and two beta chains.

It carries out the reaction (1S,2R)-1-C-(indol-3-yl)glycerol 3-phosphate + L-serine = D-glyceraldehyde 3-phosphate + L-tryptophan + H2O. The protein operates within amino-acid biosynthesis; L-tryptophan biosynthesis; L-tryptophan from chorismate: step 5/5. Functionally, the alpha subunit is responsible for the aldol cleavage of indoleglycerol phosphate to indole and glyceraldehyde 3-phosphate. The sequence is that of Tryptophan synthase alpha chain from Streptococcus mutans serotype c (strain ATCC 700610 / UA159).